Reading from the N-terminus, the 269-residue chain is Cytochrome c oxidase subunit 3 (269 aa).

7 consecutive transmembrane segments (helical) span residues 21 to 41 (PWPIVVSFSLLSLALSLALAM), 45 to 65 (IGNMNLVWLALFVLTSSATLW), 90 to 110 (GFLLFVVSEVLIFAGLFWAYF), 138 to 160 (PLLNTIILLASGATVTYSHHALI), 167 to 187 (ALSGLFITTWLIIIFVICQYI), 205 to 225 (FYAGTGLHFLHMVMLATMLAI), and 247 to 267 (VIYLHVLDIIWLFLYIVFYWW).

The protein belongs to the cytochrome c oxidase subunit 3 family. In terms of assembly, component of the cytochrome c oxidase (complex IV, CIV), a multisubunit enzyme composed of a catalytic core of 3 subunits and several supernumerary subunits. The complex exists as a monomer or a dimer and forms supercomplexes (SCs) in the inner mitochondrial membrane with ubiquinol-cytochrome c oxidoreductase (cytochrome b-c1 complex, complex III, CIII).

It localises to the mitochondrion inner membrane. The catalysed reaction is 4 Fe(II)-[cytochrome c] + O2 + 8 H(+)(in) = 4 Fe(III)-[cytochrome c] + 2 H2O + 4 H(+)(out). Component of the cytochrome c oxidase, the last enzyme in the mitochondrial electron transport chain which drives oxidative phosphorylation. The respiratory chain contains 3 multisubunit complexes succinate dehydrogenase (complex II, CII), ubiquinol-cytochrome c oxidoreductase (cytochrome b-c1 complex, complex III, CIII) and cytochrome c oxidase (complex IV, CIV), that cooperate to transfer electrons derived from NADH and succinate to molecular oxygen, creating an electrochemical gradient over the inner membrane that drives transmembrane transport and the ATP synthase. Cytochrome c oxidase is the component of the respiratory chain that catalyzes the reduction of oxygen to water. Electrons originating from reduced cytochrome c in the intermembrane space (IMS) are transferred via the dinuclear copper A center (CU(A)) of subunit 2 and heme A of subunit 1 to the active site in subunit 1, a binuclear center (BNC) formed by heme A3 and copper B (CU(B)). The BNC reduces molecular oxygen to 2 water molecules using 4 electrons from cytochrome c in the IMS and 4 protons from the mitochondrial matrix. In Lachancea kluyveri (strain ATCC 58438 / CBS 3082 / BCRC 21498 / NBRC 1685 / JCM 7257 / NCYC 543 / NRRL Y-12651) (Yeast), this protein is Cytochrome c oxidase subunit 3 (COX3).